Here is a 676-residue protein sequence, read N- to C-terminus: E3 ubiquitin-protein ligase ICP0 (676 aa).

An RING-type zinc finger spans residues 13 to 52 (CCICLDAITGAARALPCLHAFCLACIRRWLEGRPTCPLCK). Disordered regions lie at residues 101 to 153 (DLTA…GGRA), 266 to 517 (HLIP…AGAQ), and 555 to 676 (AAIS…AWRQ). Positions 123 to 153 (EAGGGAGGAEEAGEARGAGAGRAAGAAGGRA) are enriched in gly residues. A compositionally biased stretch (acidic residues) spans 286 to 303 (SDSDSEGSEDDSWSESEE). The segment covering 304–314 (SSSGLSTSDLT) has biased composition (low complexity). Positions 315-328 (AIDDTETEPETDAE) are enriched in acidic residues. Residues 351 to 361 (YVSTRGRQTPA) are compositionally biased toward polar residues. Composition is skewed to low complexity over residues 375 to 388 (GRAA…SSRS) and 397 to 411 (LPAA…QARA). Residues 422-439 (GAGLGVAAGETAGWGAGS) show a composition bias toward gly residues. Residues 440-450 (EEGRGERRARL) show a composition bias toward basic and acidic residues. Positions 474-484 (TPAPAPAPAPA) are enriched in pro residues. Low complexity predominate over residues 555–597 (AAISTRAPTPSPAGRAPAADPRRAGAPALAGAARAEVGRNGNP).

It belongs to the simplexviruses ICp0 family. In terms of processing, auto-ubiquitinated. Post-translationally, transactivation activity is possibly regulated through phosphorylation by casein kinase II.

It catalyses the reaction S-ubiquitinyl-[E2 ubiquitin-conjugating enzyme]-L-cysteine + [acceptor protein]-L-lysine = [E2 ubiquitin-conjugating enzyme]-L-cysteine + N(6)-ubiquitinyl-[acceptor protein]-L-lysine.. Its function is as follows. Evades nuclear antiviral defenses triggered by dsDNA viruses. Acts during the initial stages of lytic infection and the reactivation of latent viral genome. Prevents the antiviral effect of nuclear bodies by degrading host PML and SP100. This chain is E3 ubiquitin-protein ligase ICP0 (BICP0), found in Bovine herpesvirus 1.1 (strain Cooper) (BoHV-1).